The sequence spans 307 residues: Lipoyl synthase (307 aa).

The [4Fe-4S] cluster site is built by Cys-55, Cys-60, Cys-66, Cys-81, Cys-85, Cys-88, and Ser-292. The Radical SAM core domain maps to 67–281 (WEDREATFLI…ARHAEELGFS (215 aa)).

Belongs to the radical SAM superfamily. Lipoyl synthase family. [4Fe-4S] cluster serves as cofactor.

Its subcellular location is the cytoplasm. The enzyme catalyses [[Fe-S] cluster scaffold protein carrying a second [4Fe-4S](2+) cluster] + N(6)-octanoyl-L-lysyl-[protein] + 2 oxidized [2Fe-2S]-[ferredoxin] + 2 S-adenosyl-L-methionine + 4 H(+) = [[Fe-S] cluster scaffold protein] + N(6)-[(R)-dihydrolipoyl]-L-lysyl-[protein] + 4 Fe(3+) + 2 hydrogen sulfide + 2 5'-deoxyadenosine + 2 L-methionine + 2 reduced [2Fe-2S]-[ferredoxin]. Its pathway is protein modification; protein lipoylation via endogenous pathway; protein N(6)-(lipoyl)lysine from octanoyl-[acyl-carrier-protein]: step 2/2. Functionally, catalyzes the radical-mediated insertion of two sulfur atoms into the C-6 and C-8 positions of the octanoyl moiety bound to the lipoyl domains of lipoate-dependent enzymes, thereby converting the octanoylated domains into lipoylated derivatives. This is Lipoyl synthase from Mycolicibacterium paratuberculosis (strain ATCC BAA-968 / K-10) (Mycobacterium paratuberculosis).